A 200-amino-acid chain; its full sequence is Peptidyl-tRNA hydrolase (200 aa).

Position 16 (Phe16) interacts with tRNA. Catalysis depends on His21, which acts as the Proton acceptor. Residues Phe67, Asn69, and Asn115 each contribute to the tRNA site.

This sequence belongs to the PTH family. In terms of assembly, monomer.

It localises to the cytoplasm. The enzyme catalyses an N-acyl-L-alpha-aminoacyl-tRNA + H2O = an N-acyl-L-amino acid + a tRNA + H(+). Functionally, hydrolyzes ribosome-free peptidyl-tRNAs (with 1 or more amino acids incorporated), which drop off the ribosome during protein synthesis, or as a result of ribosome stalling. Catalyzes the release of premature peptidyl moieties from peptidyl-tRNA molecules trapped in stalled 50S ribosomal subunits, and thus maintains levels of free tRNAs and 50S ribosomes. This is Peptidyl-tRNA hydrolase from Prochlorococcus marinus (strain MIT 9215).